Consider the following 185-residue polypeptide: Intraflagellar transport protein 22 homolog (185 aa).

GTP is bound by residues Gly-10–Thr-17, Asp-63–Asp-67, and His-123–Gly-126. Residue Ser-137 is modified to Phosphoserine.

It belongs to the small GTPase superfamily. Rab family. Component of the IFT complex B, at least composed of IFT20, IFT22, IFT25, IFT27, IFT46, IFT52, TRAF3IP1/IFT54, IFT57, IFT74, IFT80, IFT81, and IFT88. Interacts with IFT88. Interacts with CFAP61.

The protein resides in the cell projection. It localises to the cilium. Its function is as follows. Small GTPase-like component of the intraflagellar transport (IFT) complex B. This chain is Intraflagellar transport protein 22 homolog (Ift22), found in Mus musculus (Mouse).